The primary structure comprises 84 residues: Turripeptide IX-01 (84 aa).

Residues 1–21 form the signal peptide; that stretch reads MGFYMLLTVALLLTSFMSVEA. The propeptide occupies 22–39; that stretch reads TPVDQAERSAMKESGLAH. Cystine bridges form between Cys48/Cys70, Cys55/Cys74, and Cys60/Cys81.

In terms of tissue distribution, expressed by the venom duct.

It is found in the secreted. This is Turripeptide IX-01 from Gemmula speciosa (Splendid gem-turris).